Reading from the N-terminus, the 834-residue chain is Protein argonaute (834 aa).

Residues S210–K326 enclose the PAZ domain. The 300-residue stretch at Y500–V799 folds into the Piwi domain.

This sequence belongs to the argonaute family. Ago subfamily. As to quaternary structure, ago1, chp1 and tas3 interact to form the core of the RNA-induced transcriptional silencing (RITS) complex. The RITS complex interacts with the RDRC complex via interaction between ago1 and hrr1. Clr4 has a role in mediating this interaction. Component of the argonaute siRNA chaperone (ARC) complex composed of ago1, arb1 and arb2. Interacts with arb1.

It is found in the cytoplasm. The protein resides in the nucleus. The protein localises to the chromosome. It localises to the centromere. Its subcellular location is the telomere. Functionally, required for G1 arrest and mating in response to nitrogen starvation. Ago1 regulation of cytokinesis and cell cycle checkpoints occurs downstream of dcr1. Required, indirectly, for regulated hyperphosphorylation of cdc2. Has a role in the RNA interference (RNAi) pathway which is important for heterochromatin formation, accurate chromosome segregation, centromere cohesion and telomere function during mitosis and meiosis. Required for silencing at the centromeres and for initiation of transcriptionally silent heterochromatin at the mating type locus. Promotes histone H3K9 methylation necessary for centromere function. Required for recruitment of swi6 and cohesin to an ectopic dg repeat. A member of the RNA-induced transcriptional silencing (RITS) complex which is involved in the biosynthesis of dsRNA from primer siRNAs provided by the RNA-directed RNA polymerase (RDRC) complex. Has ribonuclease H-like cleavage (slicing) activity towards target messages complementary to siRNA and can direct site-specific cleavage of RNA substrates via siRNA. Slicing activity is required for both post-transcriptional and transcriptional gene silencing as well as for histone H3 'Lys-10' methylation spreading, conversion of double-stranded siRNA to single-stranded siRNA and siRNA-dependent association of ago1 with chromatin. A member of the argonaute siRNA chaperone (ARC) complex which is required for histone H3K9 methylation, heterochromatin assembly and siRNA generation. The ARC complex contains mostly double-stranded siRNA. The chain is Protein argonaute (ago1) from Schizosaccharomyces pombe (strain 972 / ATCC 24843) (Fission yeast).